Reading from the N-terminus, the 117-residue chain is Immunoglobulin kappa variable 1D-16 (117 aa).

The N-terminal stretch at 1-22 (MDMRVLAQLLGLLLLCFPGARC) is a signal peptide. The framework-1 stretch occupies residues 23 to 45 (DIQMTQSPSSLSASVGDRVTITC). Residues 24 to 117 (IQMTQSPSSL…YYCQQYNSYP (94 aa)) enclose the Ig-like domain. Residues Cys-45 and Cys-110 are joined by a disulfide bond. The tract at residues 46–56 (RASQGISSWLA) is complementarity-determining-1. The interval 57-71 (WYQQKPEKAPKSLIY) is framework-2. Residues 72-78 (AASSLQS) are complementarity-determining-2. The interval 79–110 (GVPSRFSGSGSGTDFTLTISSLQPEDFATYYC) is framework-3. The tract at residues 111 to 117 (QQYNSYP) is complementarity-determining-3.

Immunoglobulins are composed of two identical heavy chains and two identical light chains; disulfide-linked.

Its subcellular location is the secreted. The protein resides in the cell membrane. Functionally, v region of the variable domain of immunoglobulin light chains that participates in the antigen recognition. Immunoglobulins, also known as antibodies, are membrane-bound or secreted glycoproteins produced by B lymphocytes. In the recognition phase of humoral immunity, the membrane-bound immunoglobulins serve as receptors which, upon binding of a specific antigen, trigger the clonal expansion and differentiation of B lymphocytes into immunoglobulins-secreting plasma cells. Secreted immunoglobulins mediate the effector phase of humoral immunity, which results in the elimination of bound antigens. The antigen binding site is formed by the variable domain of one heavy chain, together with that of its associated light chain. Thus, each immunoglobulin has two antigen binding sites with remarkable affinity for a particular antigen. The variable domains are assembled by a process called V-(D)-J rearrangement and can then be subjected to somatic hypermutations which, after exposure to antigen and selection, allow affinity maturation for a particular antigen. This chain is Immunoglobulin kappa variable 1D-16, found in Homo sapiens (Human).